A 161-amino-acid polypeptide reads, in one-letter code: uncharacterized protein (161 aa).

This sequence belongs to the sapovirus VP3 family.

This is an uncharacterized protein from Sapporo virus (isolate GI/Human/Germany/pJG-Sap01) (Hu/Dresden/pJG-Sap01/DE).